We begin with the raw amino-acid sequence, 208 residues long: Putative proteasome subunit alpha type-4-B (208 aa).

The protein belongs to the peptidase T1A family. Component of the 20S core complex of the 26S proteasome. The 26S proteasome is composed of a core protease (CP), known as the 20S proteasome, capped at one or both ends by the 19S regulatory particle (RP/PA700). The 20S proteasome core is composed of 28 subunits that are arranged in four stacked rings, resulting in a barrel-shaped structure. The two end rings are each formed by seven alpha subunits, and the two central rings are each formed by seven beta subunits. The catalytic chamber with the active sites is on the inside of the barrel.

The protein resides in the cytoplasm. Its subcellular location is the nucleus. In terms of biological role, the proteasome is a multicatalytic proteinase complex which is characterized by its ability to cleave peptides with Arg, Phe, Tyr, Leu, and Glu adjacent to the leaving group at neutral or slightly basic pH. The proteasome has an ATP-dependent proteolytic activity. This is Putative proteasome subunit alpha type-4-B (PAC2) from Arabidopsis thaliana (Mouse-ear cress).